The following is a 159-amino-acid chain: Vasotocin-neurophysin VT (159 aa).

Residues 1–17 (TAPVPACFLCLLALSSA) form the signal peptide. Cysteines 18 and 23 form a disulfide. Residue glycine 26 is modified to Glycine amide. Intrachain disulfides connect cysteine 39-cysteine 83, cysteine 42-cysteine 56, cysteine 50-cysteine 73, cysteine 57-cysteine 63, cysteine 90-cysteine 102, cysteine 96-cysteine 114, and cysteine 103-cysteine 108. N-linked (GlcNAc...) asparagine glycosylation occurs at asparagine 129.

It belongs to the vasopressin/oxytocin family. Seven disulfide bonds are present in neurophysin.

It localises to the secreted. In terms of biological role, vasotocin is an antidiuretic hormone. In Bufo japonicus (Japanese common toad), this protein is Vasotocin-neurophysin VT.